The chain runs to 189 residues: Class A basic helix-loop-helix protein 15 (189 aa).

A compositionally biased stretch (basic residues) spans 1–12 (MKTKNRPPRRRA). Disordered regions lie at residues 1 to 85 (MKTK…ERER) and 167 to 189 (TEAQPQGHLQRYSTQIHSFREGT). T25 is modified (phosphothreonine). Over residues 68-85 (GRRDSSIQRRLESNERER) the composition is skewed to basic and acidic residues. In terms of domain architecture, bHLH spans 75–127 (QRRLESNERERQRMHKLNNAFQALREVIPHVRADKKLSKIETLTLAKNYIKSL).

Forms homodimers or heterodimers with TCF3 gene products E12 and E47. These dimers bind to the E-box site, however, heterodimer with MYOD1 does not bind target DNA. In terms of tissue distribution, expressed in brain, liver, spleen and skeletal muscle.

The protein localises to the nucleus. Its function is as follows. Plays a role in controlling the transcriptional activity of MYOD1, ensuring that expanding myoblast populations remain undifferentiated. Repression may occur through muscle-specific E-box occupancy by homodimers. May also negatively regulate bHLH-mediated transcription through an N-terminal repressor domain. Serves as a key regulator of acinar cell function, stability, and identity. Also required for normal organelle localization in exocrine cells and for mitochondrial calcium ion transport. May function as a unique regulator of gene expression in several different embryonic and postnatal cell lineages. Binds to the E-box consensus sequence 5'-CANNTG-3'. This chain is Class A basic helix-loop-helix protein 15 (BHLHA15), found in Homo sapiens (Human).